Here is a 511-residue protein sequence, read N- to C-terminus: 2,3-bisphosphoglycerate-independent phosphoglycerate mutase (511 aa).

Mn(2+) is bound by residues aspartate 12 and serine 62. Serine 62 serves as the catalytic Phosphoserine intermediate. Residues histidine 123, 154–155 (RD), arginine 181, arginine 187, 252–255 (RPDR), and lysine 335 contribute to the substrate site. Residues aspartate 402, histidine 406, aspartate 444, histidine 445, and histidine 462 each contribute to the Mn(2+) site.

The protein belongs to the BPG-independent phosphoglycerate mutase family. In terms of assembly, monomer. Requires Mn(2+) as cofactor.

The enzyme catalyses (2R)-2-phosphoglycerate = (2R)-3-phosphoglycerate. It participates in carbohydrate degradation; glycolysis; pyruvate from D-glyceraldehyde 3-phosphate: step 3/5. Its function is as follows. Catalyzes the interconversion of 2-phosphoglycerate and 3-phosphoglycerate. This Acholeplasma laidlawii (strain PG-8A) protein is 2,3-bisphosphoglycerate-independent phosphoglycerate mutase.